The chain runs to 59 residues: UPF0434 protein LHK_01103 (59 aa).

Belongs to the UPF0434 family.

The protein is UPF0434 protein LHK_01103 of Laribacter hongkongensis (strain HLHK9).